Consider the following 395-residue polypeptide: Phosphoglycerate kinase (395 aa).

Substrate contacts are provided by residues 21–23 (DFN), R36, 59–62 (HLGR), R120, and R153. ATP is bound by residues K203, E325, and 351–354 (GGDS).

The protein belongs to the phosphoglycerate kinase family. In terms of assembly, monomer.

It localises to the cytoplasm. It carries out the reaction (2R)-3-phosphoglycerate + ATP = (2R)-3-phospho-glyceroyl phosphate + ADP. It participates in carbohydrate degradation; glycolysis; pyruvate from D-glyceraldehyde 3-phosphate: step 2/5. This Roseiflexus sp. (strain RS-1) protein is Phosphoglycerate kinase.